The primary structure comprises 235 residues: MLKITAIPALQDNYIWAIQQGQEVMIVDPAQADPVFHFLAKNKLNLTTILITHYHQDHIGGIAGLQATYPDLTIYGSHEVAQYVNHIVQAGDHLHLLNSDVEVINSAGHTAQHISFLFAQQYLFCGDALFSAGCGRVFTGDYQAQFNTLQRFKTLPESTLVFPAHEYTLTNLKFAASVLPNNNDIREAQARAETLRAQQQPTLPSTIKQELRINPFLQADNLAEFITLRQQKDQY.

Zn(2+) is bound by residues His53, His55, Asp57, His58, His109, Asp127, and His165.

The protein belongs to the metallo-beta-lactamase superfamily. Glyoxalase II family. As to quaternary structure, monomer. The cofactor is Zn(2+).

The enzyme catalyses an S-(2-hydroxyacyl)glutathione + H2O = a 2-hydroxy carboxylate + glutathione + H(+). Its pathway is secondary metabolite metabolism; methylglyoxal degradation; (R)-lactate from methylglyoxal: step 2/2. Its function is as follows. Thiolesterase that catalyzes the hydrolysis of S-D-lactoyl-glutathione to form glutathione and D-lactic acid. The chain is Hydroxyacylglutathione hydrolase from Haemophilus ducreyi (strain 35000HP / ATCC 700724).